Here is an 82-residue protein sequence, read N- to C-terminus: Omega-conotoxin-like Am6.2 (82 aa).

The N-terminal stretch at 1–22 (MKLTCMMIVAVLFLTAWTFVTA) is a signal peptide. The propeptide occupies 23 to 52 (VPHSSNVLENLYLKARHEMENQEASKLNMR). Cystine bridges form between Cys56–Cys73, Cys63–Cys77, and Cys72–Cys81. The residue at position 76 (Trp76) is a 6'-bromotryptophan; partial; in Am6.2b (major form).

This sequence belongs to the conotoxin O1 family. Mostly non-hydroxylated. In terms of processing, two forms of this peptides have been described. Am6.2a (Am3136) is not unmodified, while Am6.2b (Am3214) is Trp-76 brominated. Both forms are found in venom with a much more abundant brominated form. In terms of tissue distribution, expressed by the venom duct.

It is found in the secreted. In terms of biological role, omega-conotoxins act at presynaptic membranes, they bind and block voltage-gated calcium channels (Cav). This chain is Omega-conotoxin-like Am6.2, found in Conus amadis (Amadis cone).